Consider the following 685-residue polypeptide: DNA-directed RNA polymerase subunit beta' (685 aa).

Residues Cys-69, Cys-71, Cys-87, and Cys-90 each coordinate Zn(2+). Residues Asp-489, Asp-491, and Asp-493 each contribute to the Mg(2+) site.

It belongs to the RNA polymerase beta' chain family. RpoC1 subfamily. In plastids the minimal PEP RNA polymerase catalytic core is composed of four subunits: alpha, beta, beta', and beta''. When a (nuclear-encoded) sigma factor is associated with the core the holoenzyme is formed, which can initiate transcription. Requires Mg(2+) as cofactor. It depends on Zn(2+) as a cofactor.

The protein resides in the plastid. Its subcellular location is the chloroplast. The enzyme catalyses RNA(n) + a ribonucleoside 5'-triphosphate = RNA(n+1) + diphosphate. DNA-dependent RNA polymerase catalyzes the transcription of DNA into RNA using the four ribonucleoside triphosphates as substrates. The sequence is that of DNA-directed RNA polymerase subunit beta' from Buxus microphylla (Littleleaf boxwood).